Here is a 145-residue protein sequence, read N- to C-terminus: Protein phosphatase 1 regulatory subunit 14D (145 aa).

Residues 1–14 (MLSSSPASCTSPSP) show a composition bias toward low complexity. The interval 1–59 (MLSSSPASCTSPSPDGENPCKKVHWASGRRRTSSTDSESKSHPDSSKIPRSRRPSRLTV) is disordered. The interaction with protein phosphatase 1 stretch occupies residues 21–25 (KKVHW). Residues 21-32 (KKVHWASGRRRT) show a composition bias toward basic residues. A compositionally biased stretch (basic and acidic residues) spans 37 to 47 (SESKSHPDSSK). At Thr-58 the chain carries Phosphothreonine.

This sequence belongs to the PP1 inhibitor family. In terms of processing, phosphorylated on several residues. As to expression, detected in colon, intestine, kidney and brain cortex.

The protein localises to the cytoplasm. Functionally, inhibitor of PPP1CA. Has inhibitory activity only when phosphorylated, creating a molecular switch for regulating the phosphorylation status of PPP1CA substrates and smooth muscle contraction. The chain is Protein phosphatase 1 regulatory subunit 14D (PPP1R14D) from Homo sapiens (Human).